The sequence spans 248 residues: Triosephosphate isomerase (248 aa).

Substrate is bound by residues Asn-10 and Lys-12. Residue His-95 is the Electrophile of the active site. Residue Glu-165 is the Proton acceptor of the active site.

The protein belongs to the triosephosphate isomerase family. In terms of assembly, homodimer.

It catalyses the reaction D-glyceraldehyde 3-phosphate = dihydroxyacetone phosphate. It functions in the pathway carbohydrate biosynthesis; gluconeogenesis. Its pathway is carbohydrate degradation; glycolysis; D-glyceraldehyde 3-phosphate from glycerone phosphate: step 1/1. This is Triosephosphate isomerase (TPI1) from Eremothecium gossypii (strain ATCC 10895 / CBS 109.51 / FGSC 9923 / NRRL Y-1056) (Yeast).